A 99-amino-acid chain; its full sequence is Small ribosomal subunit protein bS6c (99 aa).

This sequence belongs to the bacterial ribosomal protein bS6 family.

It is found in the plastid. The protein localises to the chloroplast. Its function is as follows. Binds together with bS18 to 16S ribosomal RNA. This chain is Small ribosomal subunit protein bS6c, found in Cyanidioschyzon merolae (strain NIES-3377 / 10D) (Unicellular red alga).